The following is an 885-amino-acid chain: Eukaryotic translation initiation factor 3 subunit C (885 aa).

The tract at residues 1–81 is disordered; it reads MSFFAKLQGS…SDSDDERQAV (81 aa). Over residues 9-28 the composition is skewed to low complexity; that stretch reads GSDSESSSGSESEESILSGS. Acidic residues predominate over residues 55–76; it reads EESESEEESSDEDEEEMSDSDD. A PCI domain is found at 624–797; sequence FHMHLNVELL…GVVIFHRVEQ (174 aa). A disordered region spans residues 822–885; it reads LDVKLGNQGQ…TTMGRRVTAQ (64 aa). The span at 855 to 872 shows a compositional bias: gly residues; sequence RGTYRGRGGRGGRGGFNQ.

The protein belongs to the eIF-3 subunit C family. In terms of assembly, component of the eukaryotic translation initiation factor 3 (eIF-3) complex.

The protein localises to the cytoplasm. Its function is as follows. Component of the eukaryotic translation initiation factor 3 (eIF-3) complex, which is involved in protein synthesis of a specialized repertoire of mRNAs and, together with other initiation factors, stimulates binding of mRNA and methionyl-tRNAi to the 40S ribosome. The eIF-3 complex specifically targets and initiates translation of a subset of mRNAs involved in cell proliferation. The polypeptide is Eukaryotic translation initiation factor 3 subunit C (Cryptococcus neoformans var. neoformans serotype D (strain B-3501A) (Filobasidiella neoformans)).